The chain runs to 331 residues: tRNA pseudouridine synthase B (331 aa).

Asp-51 acts as the Nucleophile in catalysis.

This sequence belongs to the pseudouridine synthase TruB family. Type 1 subfamily.

The enzyme catalyses uridine(55) in tRNA = pseudouridine(55) in tRNA. Responsible for synthesis of pseudouridine from uracil-55 in the psi GC loop of transfer RNAs. The protein is tRNA pseudouridine synthase B of Verminephrobacter eiseniae (strain EF01-2).